The sequence spans 294 residues: Nucleotide-binding protein CLK_2809 (294 aa).

8-15 (GLSGAGKT) is a binding site for ATP. Position 59–62 (59–62 (DIRG)) interacts with GTP.

This sequence belongs to the RapZ-like family.

Displays ATPase and GTPase activities. This is Nucleotide-binding protein CLK_2809 from Clostridium botulinum (strain Loch Maree / Type A3).